We begin with the raw amino-acid sequence, 435 residues long: Histidinol dehydrogenase (435 aa).

NAD(+) is bound by residues Tyr-131, Gln-189, and Asn-212. 3 residues coordinate substrate: Ser-238, Gln-260, and His-263. The Zn(2+) site is built by Gln-260 and His-263. Residues Glu-327 and His-328 each act as proton acceptor in the active site. Residues His-328, Asp-361, Glu-415, and His-420 each coordinate substrate. Zn(2+) is bound at residue Asp-361. His-420 serves as a coordination point for Zn(2+).

The protein belongs to the histidinol dehydrogenase family. As to quaternary structure, homodimer. Zn(2+) serves as cofactor.

The enzyme catalyses L-histidinol + 2 NAD(+) + H2O = L-histidine + 2 NADH + 3 H(+). Its pathway is amino-acid biosynthesis; L-histidine biosynthesis; L-histidine from 5-phospho-alpha-D-ribose 1-diphosphate: step 9/9. Catalyzes the sequential NAD-dependent oxidations of L-histidinol to L-histidinaldehyde and then to L-histidine. The sequence is that of Histidinol dehydrogenase (hisD) from Buchnera aphidicola subsp. Schizaphis graminum (strain Sg).